The chain runs to 347 residues: Violet-sensitive opsin (347 aa).

At 1-31 (MLEEEDFYLFKNVSNVSPFDGPQYHIAPKWA) the chain is on the extracellular side. Asparagine 12 carries an N-linked (GlcNAc...) asparagine glycan. The chain crosses the membrane as a helical span at residues 32–56 (FTLQAIFMGMVFLIGTPLNFIVLLV). Over 57–68 (TIKYKKLRQPLN) the chain is Cytoplasmic. The chain crosses the membrane as a helical span at residues 69–94 (YILVNITVGGFLMCIFSIFPVFVSSS). Residues 95-108 (QGYFFFGRIACSID) lie on the Extracellular side of the membrane. The cysteines at positions 105 and 182 are disulfide-linked. The chain crosses the membrane as a helical span at residues 109 to 128 (AFVGTLTGLVTGWSLAFLAF). Over 129-147 (ERYIVICKPMGNFNFSSSH) the chain is Cytoplasmic. Residues 148-171 (ALAVVICTWIIGIVVSVPPFLGWS) form a helical membrane-spanning segment. The Extracellular portion of the chain corresponds to 172 to 197 (RYMPEGLQCSCGPDWYTVGTKYRSEY). A helical transmembrane segment spans residues 198–225 (YTWFIFIFCFVIPLSLICFSYGRLLGAL). The Cytoplasmic portion of the chain corresponds to 226–247 (RAVAAQQQESASTQKAEREVSR). Residues 248–271 (MVIFMVGSFCLCYVPYAAMAMYMV) traverse the membrane as a helical segment. The Extracellular segment spans residues 272-279 (TNRNHGLD). Residues 280 to 304 (LRLVTIPAFFSKSSCVYNPIIYSFM) traverse the membrane as a helical segment. N6-(retinylidene)lysine is present on lysine 291. Over 305–347 (NKQFRGCIMETVCGRPMSDDSSVSSTSQRTEVSTVSSSQVSPA) the chain is Cytoplasmic. Residues 323–347 (DDSSVSSTSQRTEVSTVSSSQVSPA) form a disordered region.

This sequence belongs to the G-protein coupled receptor 1 family. Opsin subfamily. In terms of processing, phosphorylated on some or all of the serine and threonine residues present in the C-terminal region. As to expression, the color pigments are found in the cone photoreceptor cells.

It is found in the membrane. Functionally, visual pigments are the light-absorbing molecules that mediate vision. They consist of an apoprotein, opsin, covalently linked to cis-retinal. This chain is Violet-sensitive opsin, found in Xenopus laevis (African clawed frog).